The following is a 415-amino-acid chain: Alpha-2Db adrenergic receptor (415 aa).

The Extracellular portion of the chain corresponds to Met1–Ser33. N-linked (GlcNAc...) asparagine glycosylation is found at Asn12 and Asn18. A helical transmembrane segment spans residues Val34–Val58. Residues Phe59 to Leu70 are Cytoplasmic-facing. Residues Phe71 to Met96 traverse the membrane as a helical segment. Over Gly97–Cys106 the chain is Extracellular. The cysteines at positions 106 and 179 are disulfide-linked. Residues Ala107–Leu129 traverse the membrane as a helical segment. Topologically, residues Asp130–Ile150 are cytoplasmic. The chain crosses the membrane as a helical span at residues Lys151–Lys173. Topologically, residues His174–Glu184 are extracellular. Residue Asn183 is glycosylated (N-linked (GlcNAc...) asparagine). The chain crosses the membrane as a helical span at residues Thr185 to Cys208. Residues Arg209 to Val339 lie on the Cytoplasmic side of the membrane. A disordered region spans residues Gln234 to Asn299. Residues Asn276–Ser286 show a composition bias toward basic residues. The helical transmembrane segment at Leu340–Ile363 threads the bilayer. The Extracellular portion of the chain corresponds to Cys364 to Asn376. The chain crosses the membrane as a helical span at residues Leu377–Asn397. The Cytoplasmic segment spans residues Arg398–Thr415.

It belongs to the G-protein coupled receptor 1 family. Adrenergic receptor subfamily. ADRA2D sub-subfamily.

It is found in the cell membrane. Functionally, alpha-2 adrenergic receptors mediate the catecholamine-induced inhibition of adenylate cyclase through the action of G proteins. The order of potency for this receptor is dexmedetomidine &gt; norepinephrine = epinephrine &gt; oxymetazoline. In Danio rerio (Zebrafish), this protein is Alpha-2Db adrenergic receptor (adra2db).